Consider the following 365-residue polypeptide: Peptide chain release factor 2 (365 aa).

Position 252 is an N5-methylglutamine (Gln252).

It belongs to the prokaryotic/mitochondrial release factor family. Post-translationally, methylated by PrmC. Methylation increases the termination efficiency of RF2.

It is found in the cytoplasm. In terms of biological role, peptide chain release factor 2 directs the termination of translation in response to the peptide chain termination codons UGA and UAA. The sequence is that of Peptide chain release factor 2 from Klebsiella pneumoniae (strain 342).